A 189-amino-acid polypeptide reads, in one-letter code: Glycerol-3-phosphate acyltransferase (189 aa).

4 helical membrane-spanning segments follow: residues 1 to 21 (MVWL…AILL), 79 to 99 (QQAW…YFNF), 113 to 133 (LGLY…VFAF), and 151 to 171 (LLAW…GVIV).

The protein belongs to the PlsY family. As to quaternary structure, probably interacts with PlsX.

The protein localises to the cell inner membrane. It carries out the reaction an acyl phosphate + sn-glycerol 3-phosphate = a 1-acyl-sn-glycero-3-phosphate + phosphate. Its pathway is lipid metabolism; phospholipid metabolism. Functionally, catalyzes the transfer of an acyl group from acyl-phosphate (acyl-PO(4)) to glycerol-3-phosphate (G3P) to form lysophosphatidic acid (LPA). This enzyme utilizes acyl-phosphate as fatty acyl donor, but not acyl-CoA or acyl-ACP. The protein is Glycerol-3-phosphate acyltransferase of Azotobacter vinelandii (strain DJ / ATCC BAA-1303).